A 105-amino-acid chain; its full sequence is Phosphoribosyl-ATP pyrophosphatase (105 aa).

This sequence belongs to the PRA-PH family.

It is found in the cytoplasm. It carries out the reaction 1-(5-phospho-beta-D-ribosyl)-ATP + H2O = 1-(5-phospho-beta-D-ribosyl)-5'-AMP + diphosphate + H(+). The protein operates within amino-acid biosynthesis; L-histidine biosynthesis; L-histidine from 5-phospho-alpha-D-ribose 1-diphosphate: step 2/9. The protein is Phosphoribosyl-ATP pyrophosphatase of Ruegeria pomeroyi (strain ATCC 700808 / DSM 15171 / DSS-3) (Silicibacter pomeroyi).